Consider the following 379-residue polypeptide: Chaperone protein DnaJ (379 aa).

One can recognise a J domain in the interval 5 to 70; that stretch reads DYYETLGCDR…QKRAAYDRFG (66 aa). A CR-type zinc finger spans residues 134 to 212; sequence GKTAQIKIPT…CGGAGRVTRE (79 aa). Zn(2+) is bound by residues Cys-147, Cys-150, Cys-164, Cys-167, Cys-186, Cys-189, Cys-200, and Cys-203. 4 CXXCXGXG motif repeats span residues 147–154, 164–171, 186–193, and 200–207; these read CETCSGTG, CRMCGGAG, CPNCQGRG, and CSDCGGAG.

The protein belongs to the DnaJ family. As to quaternary structure, homodimer. The cofactor is Zn(2+).

It is found in the cytoplasm. Participates actively in the response to hyperosmotic and heat shock by preventing the aggregation of stress-denatured proteins and by disaggregating proteins, also in an autonomous, DnaK-independent fashion. Unfolded proteins bind initially to DnaJ; upon interaction with the DnaJ-bound protein, DnaK hydrolyzes its bound ATP, resulting in the formation of a stable complex. GrpE releases ADP from DnaK; ATP binding to DnaK triggers the release of the substrate protein, thus completing the reaction cycle. Several rounds of ATP-dependent interactions between DnaJ, DnaK and GrpE are required for fully efficient folding. Also involved, together with DnaK and GrpE, in the DNA replication of plasmids through activation of initiation proteins. The polypeptide is Chaperone protein DnaJ (Xanthobacter autotrophicus (strain ATCC BAA-1158 / Py2)).